The sequence spans 220 residues: RPA-interacting protein B (220 aa).

An interaction with importin beta region spans residues 1–45 (MEAERRHRALYKGTTPPWKETYRKRCVERLKSNRSKLLDKFRQVG). Positions 49-165 (HGGVGGSFLV…QCGVYINTQS (117 aa)) are interaction with RPA1. The RIP-type zinc finger occupies 138–213 (CPVCNRNYLT…ASLFMSCQEC (76 aa)).

Interacts directly with the RPA1 subunit of RPA complex. Interacts with importin beta, but not with importin alpha. Forms a complex with the RPA complex and importin beta, which is dissociated by Ran-GTP.

It localises to the nucleus. Mediates the import of RPA complex into the nucleus, via its interaction with importin beta. This Xenopus laevis (African clawed frog) protein is RPA-interacting protein B (rpain-b).